The chain runs to 229 residues: Ribonuclease HII (229 aa).

Positions 42–229 constitute an RNase H type-2 domain; that stretch reads TRIAGVDEVG…KPVHKILYQE (188 aa). Positions 48, 49, and 139 each coordinate a divalent metal cation.

It belongs to the RNase HII family. Requires Mn(2+) as cofactor. Mg(2+) serves as cofactor.

It is found in the cytoplasm. It catalyses the reaction Endonucleolytic cleavage to 5'-phosphomonoester.. Functionally, endonuclease that specifically degrades the RNA of RNA-DNA hybrids. The sequence is that of Ribonuclease HII from Ruegeria sp. (strain TM1040) (Silicibacter sp.).